A 492-amino-acid polypeptide reads, in one-letter code: Steroid 21-hydroxylase (492 aa).

Positions 91 and 120 each coordinate heme b. Arginine 231 lines the 17alpha-hydroxyprogesterone pocket. Arginine 231 is a progesterone binding site. Residues histidine 363, arginine 424, and cysteine 426 each coordinate heme b.

The protein belongs to the cytochrome P450 family. The cofactor is heme b.

It is found in the endoplasmic reticulum membrane. The protein localises to the microsome membrane. The catalysed reaction is 17alpha-hydroxyprogesterone + reduced [NADPH--hemoprotein reductase] + O2 = 11-deoxycortisol + oxidized [NADPH--hemoprotein reductase] + H2O + H(+). The enzyme catalyses progesterone + reduced [NADPH--hemoprotein reductase] + O2 = 21-hydroxyprogesterone + oxidized [NADPH--hemoprotein reductase] + H2O + H(+). Specifically catalyzes the 21-hydroxylation of steroids. Required for the adrenal synthesis of mineralocorticoids and glucocorticoids. This chain is Steroid 21-hydroxylase (CYP21), found in Felis catus (Cat).